Here is a 388-residue protein sequence, read N- to C-terminus: LL-diaminopimelate aminotransferase (388 aa).

2 residues coordinate substrate: tyrosine 16 and glycine 41. Residues tyrosine 70, serine 104–lysine 105, tyrosine 129, asparagine 179, tyrosine 210, and serine 239–serine 241 each bind pyridoxal 5'-phosphate. Substrate is bound by residues lysine 105, tyrosine 129, and asparagine 179. Residue lysine 242 is modified to N6-(pyridoxal phosphate)lysine. Arginine 250 serves as a coordination point for pyridoxal 5'-phosphate. Arginine 368 contacts substrate.

This sequence belongs to the class-I pyridoxal-phosphate-dependent aminotransferase family. LL-diaminopimelate aminotransferase subfamily. As to quaternary structure, homodimer. The cofactor is pyridoxal 5'-phosphate.

The catalysed reaction is (2S,6S)-2,6-diaminopimelate + 2-oxoglutarate = (S)-2,3,4,5-tetrahydrodipicolinate + L-glutamate + H2O + H(+). It participates in amino-acid biosynthesis; L-lysine biosynthesis via DAP pathway; LL-2,6-diaminopimelate from (S)-tetrahydrodipicolinate (aminotransferase route): step 1/1. In terms of biological role, involved in the synthesis of meso-diaminopimelate (m-DAP or DL-DAP), required for both lysine and peptidoglycan biosynthesis. Catalyzes the direct conversion of tetrahydrodipicolinate to LL-diaminopimelate. The sequence is that of LL-diaminopimelate aminotransferase from Maridesulfovibrio salexigens (strain ATCC 14822 / DSM 2638 / NCIMB 8403 / VKM B-1763) (Desulfovibrio salexigens).